The sequence spans 69 residues: Putative membrane protein insertion efficiency factor (69 aa).

The protein belongs to the UPF0161 family.

It is found in the cell inner membrane. In terms of biological role, could be involved in insertion of integral membrane proteins into the membrane. This is Putative membrane protein insertion efficiency factor from Chromobacterium violaceum (strain ATCC 12472 / DSM 30191 / JCM 1249 / CCUG 213 / NBRC 12614 / NCIMB 9131 / NCTC 9757 / MK).